Here is a 146-residue protein sequence, read N- to C-terminus: Anti-sigma F factor (146 aa).

It belongs to the anti-sigma-factor family.

The catalysed reaction is L-seryl-[protein] + ATP = O-phospho-L-seryl-[protein] + ADP + H(+). It catalyses the reaction L-threonyl-[protein] + ATP = O-phospho-L-threonyl-[protein] + ADP + H(+). Binds to sigma F and blocks its ability to form an RNA polymerase holoenzyme (E-sigma F). Phosphorylates SpoIIAA on a serine residue. This phosphorylation may enable SpoIIAA to act as an anti-anti-sigma factor that counteracts SpoIIAB and thus releases sigma F from inhibition. This is Anti-sigma F factor (spoIIAB) from Bacillus subtilis (strain 168).